A 554-amino-acid polypeptide reads, in one-letter code: MFCIQCEQTIRTPAGNGCSYAQGMCGKLAATSDLQDLLIYMLQGVSVYAVKARELGVVDTEVDTFVPKAFFSTLTNVNFDDERIIAYAKQAAQYRESLKNAYEATCEQSGKTAEQMPPVAQLVLGTSKLEMLSQAPISLLNKDKNNIHEDILGLRLLCLYGLKGAAAYMEHARVLGKTDVDIAADFHRIMAFLGEPSVDADKLFSTAMEIGQLNYRIMALLDAGETEAFGHPEPTVVNTKPVKGKAILVSGHDMKDLELILEQTAGKGINVYTHGEMLPALAYPAFKKYPHLVGNYGSAWQNQQKEFANFPGAVVMTSNCIIDPNVGQYSDRIFTRSIVGWPGVVHVTGDDFSVVIEKALSNDGFHYDEIPHNITIGFARNALMAAAPTVVENVKNGSIKHFFLVGGCDGDKSERSYFTDLAKSAPKDSIILTLGCGKYKFNKLEFGDINGIPRLLDIGQCNDAYSAIQLAIALSQIFECDINELPLNLVLSWFEQKAIVVLLTLLSLGVKNIRTGPTPPAFLTANLAKILEDKFGLRNTTTVEADLKTMLNVA.

[2Fe-2S] cluster is bound by residues C3, C6, C18, and C25. Hybrid [4Fe-2O-2S] cluster is bound by residues H252, E276, C320, C408, C436, C461, E495, and K497. C408 is modified (cysteine persulfide).

The protein belongs to the HCP family. [2Fe-2S] cluster is required as a cofactor. The cofactor is hybrid [4Fe-2O-2S] cluster.

It localises to the cytoplasm. The catalysed reaction is A + NH4(+) + H2O = hydroxylamine + AH2 + H(+). Functionally, catalyzes the reduction of hydroxylamine to form NH(3) and H(2)O. The sequence is that of Hydroxylamine reductase from Shewanella oneidensis (strain ATCC 700550 / JCM 31522 / CIP 106686 / LMG 19005 / NCIMB 14063 / MR-1).